The following is a 358-amino-acid chain: F-box only protein 25 (358 aa).

Residues 1–83 are interaction with beta-actin; the sequence is MPFLGQDWRS…NDTNTQSFYR (83 aa). Residues 226-274 form the F-box domain; that stretch reads LTLSDLPLHMLNNILYRFSDGWDIITLGQVTPTLYMLSEDRQLWKKLCQ.

As to quaternary structure, part of a SCF (SKP1-cullin-F-box) protein ligase complex consisting of FBXO25, SKP1, CUL1 and RBX1. Interacts directly with SKP1 and CUL1. Interacts (via C-terminus) with beta-actin (via N-terminus).

Its subcellular location is the nucleus. The protein operates within protein modification; protein ubiquitination. Functionally, substrate-recognition component of the SCF (SKP1-CUL1-F-box protein)-type E3 ubiquitin ligase complex. May play a role in accumulation of expanded polyglutamine (polyQ) protein huntingtin (HTT). This Macaca fascicularis (Crab-eating macaque) protein is F-box only protein 25 (FBXO25).